A 150-amino-acid polypeptide reads, in one-letter code: MTTEKKTMNISEIQELLPHRYPFLLIDRVVDFQEEKYLHAIKNVSVNEPQFTGHFPQLPVFPGVLILEAMAQATGLLAFKSFGAPSENELYYFASVDGAKFRKPVVPGDQLIIEVEFIKERRGIAAFTGVAKVDGDVVCSAELKCARREF.

Residue histidine 54 is part of the active site.

The protein belongs to the thioester dehydratase family. FabZ subfamily.

Its subcellular location is the cytoplasm. It carries out the reaction a (3R)-hydroxyacyl-[ACP] = a (2E)-enoyl-[ACP] + H2O. In terms of biological role, involved in unsaturated fatty acids biosynthesis. Catalyzes the dehydration of short chain beta-hydroxyacyl-ACPs and long chain saturated and unsaturated beta-hydroxyacyl-ACPs. This Vibrio vulnificus (strain CMCP6) protein is 3-hydroxyacyl-[acyl-carrier-protein] dehydratase FabZ.